Here is a 164-residue protein sequence, read N- to C-terminus: Phosphopantetheine adenylyltransferase (164 aa).

Serine 9 is a substrate binding site. ATP-binding positions include 9 to 10 (SF) and histidine 17. Substrate-binding residues include lysine 41, leucine 73, and lysine 87. ATP-binding positions include 88-90 (GLR), glutamate 98, and 122-128 (YSYLSSS).

It belongs to the bacterial CoaD family. Homohexamer. It depends on Mg(2+) as a cofactor.

It localises to the cytoplasm. It carries out the reaction (R)-4'-phosphopantetheine + ATP + H(+) = 3'-dephospho-CoA + diphosphate. It functions in the pathway cofactor biosynthesis; coenzyme A biosynthesis; CoA from (R)-pantothenate: step 4/5. Its function is as follows. Reversibly transfers an adenylyl group from ATP to 4'-phosphopantetheine, yielding dephospho-CoA (dPCoA) and pyrophosphate. The sequence is that of Phosphopantetheine adenylyltransferase from Rhodococcus opacus (strain B4).